The primary structure comprises 311 residues: Dihydroorotate dehydrogenase B (NAD(+)), catalytic subunit (311 aa).

Residues Ser-24 and 48-49 each bind FMN; that span reads KA. Residues Lys-48 and 72–76 contribute to the substrate site; that span reads NAIGL. Asn-104 and Asn-132 together coordinate FMN. Position 132 (Asn-132) interacts with substrate. Residue Cys-135 is the Nucleophile of the active site. 2 residues coordinate FMN: Lys-170 and Ile-196. Residue 197–198 coordinates substrate; that stretch reads NT. FMN is bound by residues Gly-222, 248–249, and 270–271; these read GG and GT.

It belongs to the dihydroorotate dehydrogenase family. Type 1 subfamily. As to quaternary structure, heterotetramer of 2 PyrK and 2 PyrD type B subunits. FMN serves as cofactor.

The protein localises to the cytoplasm. It carries out the reaction (S)-dihydroorotate + NAD(+) = orotate + NADH + H(+). Its pathway is pyrimidine metabolism; UMP biosynthesis via de novo pathway; orotate from (S)-dihydroorotate (NAD(+) route): step 1/1. Functionally, catalyzes the conversion of dihydroorotate to orotate with NAD(+) as electron acceptor. The polypeptide is Dihydroorotate dehydrogenase B (NAD(+)), catalytic subunit (pyrDB) (Lactococcus lactis subsp. lactis (strain IL1403) (Streptococcus lactis)).